The chain runs to 320 residues: tRNA pseudouridine synthase B (320 aa).

The active-site Nucleophile is the Asp-41. 2 disordered regions span residues 116–136 and 259–284; these read PPQV…ARRG and DQCQ…DPSA. The span at 125–136 shows a compositional bias: basic and acidic residues; the sequence is QGERAHARARRG. The segment covering 270–284 has biased composition (polar residues); the sequence is SDQQESAPNQTDPSA.

Belongs to the pseudouridine synthase TruB family. Type 1 subfamily.

The catalysed reaction is uridine(55) in tRNA = pseudouridine(55) in tRNA. Responsible for synthesis of pseudouridine from uracil-55 in the psi GC loop of transfer RNAs. The chain is tRNA pseudouridine synthase B from Prochlorococcus marinus (strain MIT 9313).